The primary structure comprises 291 residues: Porphobilinogen deaminase (291 aa).

At Cys-238 the chain carries S-(dipyrrolylmethanemethyl)cysteine.

Belongs to the HMBS family. As to quaternary structure, monomer. Requires dipyrromethane as cofactor.

It catalyses the reaction 4 porphobilinogen + H2O = hydroxymethylbilane + 4 NH4(+). The protein operates within porphyrin-containing compound metabolism; protoporphyrin-IX biosynthesis; coproporphyrinogen-III from 5-aminolevulinate: step 2/4. Tetrapolymerization of the monopyrrole PBG into the hydroxymethylbilane pre-uroporphyrinogen in several discrete steps. The sequence is that of Porphobilinogen deaminase from Clostridium beijerinckii (strain ATCC 51743 / NCIMB 8052) (Clostridium acetobutylicum).